The chain runs to 285 residues: Eukaryotic translation initiation factor 3 subunit F-2 (285 aa).

An MPN domain is found at valine 11–glycine 145.

This sequence belongs to the eIF-3 subunit F family. Component of the eukaryotic translation initiation factor 3 (eIF-3) complex. The eIF-3 complex interacts with pix.

Its subcellular location is the cytoplasm. Functionally, component of the eukaryotic translation initiation factor 3 (eIF-3) complex, which is involved in protein synthesis of a specialized repertoire of mRNAs and, together with other initiation factors, stimulates binding of mRNA and methionyl-tRNAi to the 40S ribosome. The eIF-3 complex specifically targets and initiates translation of a subset of mRNAs involved in cell proliferation. This Drosophila ananassae (Fruit fly) protein is Eukaryotic translation initiation factor 3 subunit F-2.